The following is a 27-amino-acid chain: Flagellar filament 34 kDa core protein (27 aa).

The protein belongs to the bacterial flagellin family. In terms of assembly, the flagellum consists of an outer layer composed of repeating units of FlaA around a core that contains one or all of five antigenically related polypeptides.

Its subcellular location is the periplasmic flagellum. The protein localises to the periplasm. Its function is as follows. Component of the core of the flagella. This Spirochaeta aurantia protein is Flagellar filament 34 kDa core protein.